The chain runs to 660 residues: DNA polymerase alpha-associated DNA helicase A (660 aa).

232-239 is a binding site for ATP; it reads GPPGTGKT.

It belongs to the DNA2/NAM7 helicase family. In terms of assembly, associates with the hexameric DNA polymerase alpha.

Its subcellular location is the cytoplasm. The protein resides in the nucleus. The catalysed reaction is ATP + H2O = ADP + phosphate + H(+). Its function is as follows. DNA polymerase alpha-associated DNA helicase which may be involved in DNA replication. This chain is DNA polymerase alpha-associated DNA helicase A (hcs1), found in Schizosaccharomyces pombe (strain 972 / ATCC 24843) (Fission yeast).